Reading from the N-terminus, the 104-residue chain is L-rhamnose mutarotase (104 aa).

Residue Y18 coordinates substrate. H22 acts as the Proton donor in catalysis. Residues Y41 and W76–W77 each bind substrate.

It belongs to the rhamnose mutarotase family. As to quaternary structure, homodimer.

It localises to the cytoplasm. The catalysed reaction is alpha-L-rhamnose = beta-L-rhamnose. It participates in carbohydrate metabolism; L-rhamnose metabolism. In terms of biological role, involved in the anomeric conversion of L-rhamnose. The chain is L-rhamnose mutarotase from Shigella sonnei (strain Ss046).